Here is a 336-residue protein sequence, read N- to C-terminus: MFPTRVLRSTLQKLPHRETVPMAYDLHMPQRSLFQNLNEKHTEPIVFLHGIFGSKKSYELDSKMIAHGTHTPVYTVDIRNHGQTSHAMPFNYDTLAQDVKEFCHVQGLKSVKLVGYSLGAKISMLAALKYPELVKSAVIIDNAPVKQPYIELYMKQYVKSMLHVLEEAKIKTTDKDWKNKASDAMKKFLPNGVIRKNLLVNLVNKKPDGFESPVVNFDEGLIQFLNPIRQMEEAAVKDVTDWPEESTEGLKYNGPVKFIKGLKSPFINEEGMTKIQDIFPNNEFANVNSSHDILDQRPTEYVKIICDFFNAHRYESAPSNTIIGHKDFKTTIDMRV.

The N-terminal 14 residues, 1–14 (MFPTRVLRSTLQKL), are a transit peptide targeting the mitochondrion. Residues 44–296 (PIVFLHGIFG…VNSSHDILDQ (253 aa)) form the AB hydrolase-1 domain. Catalysis depends on charge relay system residues Ser-117, Asp-141, and His-291.

Belongs to the AB hydrolase superfamily.

The protein resides in the mitochondrion. The enzyme catalyses ethanol + acetyl-CoA = ethyl acetate + CoA. The catalysed reaction is acetyl-CoA + H2O = acetate + CoA + H(+). It catalyses the reaction ethyl acetate + H2O = ethanol + acetate + H(+). Its function is as follows. Alcohol acetyltransferase that catalyzes the synthesis of ethyl acetate from ethanol and acetyl-CoA. Can also function as a thioesterase by hydrolyzing acetyl-CoA in the absence of ethanol, as well as esterase hydrolyzing ethyl acetate. This is Ethanol acetyltransferase 1 (EAT1) from Cyberlindnera jadinii (strain ATCC 18201 / CBS 1600 / BCRC 20928 / JCM 3617 / NBRC 0987 / NRRL Y-1542) (Torula yeast).